Here is a 619-residue protein sequence, read N- to C-terminus: ATP-dependent zinc metalloprotease FtsH (619 aa).

Topologically, residues 1–11 are cytoplasmic; it reads MDKQSKFRIKT. Residues 12 to 32 traverse the membrane as a helical segment; the sequence is FFKKIIFFLIIFCFFYFFNFI. Over 33-131 the chain is Periplasmic; sequence KKTKKITHTT…FKNYKIYTVL (99 aa). Residues 132 to 152 form a helical membrane-spanning segment; it reads NFFYDYGFFLMIIIICWIFIF. At 153–619 the chain is on the cytoplasmic side; that stretch reads RKIASRSSES…FKEDFASILD (467 aa). 224–231 contacts ATP; that stretch reads GPPGTGKT. H447 is a Zn(2+) binding site. E448 is a catalytic residue. Zn(2+) is bound by residues H451 and D522.

In the central section; belongs to the AAA ATPase family. The protein in the C-terminal section; belongs to the peptidase M41 family. Homohexamer. The cofactor is Zn(2+).

It localises to the cell inner membrane. Functionally, acts as a processive, ATP-dependent zinc metallopeptidase for both cytoplasmic and membrane proteins. Plays a role in the quality control of integral membrane proteins. This chain is ATP-dependent zinc metalloprotease FtsH, found in Karelsulcia muelleri (strain DMIN) (Sulcia muelleri).